A 403-amino-acid polypeptide reads, in one-letter code: Sex hormone-binding globulin (403 aa).

Positions 1-30 are cleaved as a signal peptide; it reads MEKGEVASLRCRLLLLLLLLTLPPTHQGRT. Laminin G-like domains are found at residues 46–218 and 225–391; these read KYLS…LGNC and GLFF…THSC. C194 and C218 are oxidised to a cystine. N-linked (GlcNAc...) asparagine glycosylation occurs at N274. A disulfide bond links C363 and C391. An N-linked (GlcNAc...) asparagine glycan is attached at N397.

As to quaternary structure, homodimer. In terms of tissue distribution, isoform 2 is only expressed in the liver.

Its subcellular location is the secreted. In terms of biological role, functions as an androgen transport protein, but may also be involved in receptor mediated processes. Each dimer binds one molecule of steroid. Specific for 5-alpha-dihydrotestosterone, testosterone, and 17-beta-estradiol. Regulates the plasma metabolic clearance rate of steroid hormones by controlling their plasma concentration. The polypeptide is Sex hormone-binding globulin (Shbg) (Rattus norvegicus (Rat)).